Here is a 158-residue protein sequence, read N- to C-terminus: MKLDRYDLKILEILSRDGRITKSKLAEAINLSVSPCWERVRRLEKAGVIEGYGARLNTDVLVKRTPVWVQIELKAHNAESFARFEALVHDTPEVTECVAVGGGVDYLVKFEATTIDTYQRLIDEWLVSDVGIERYFTYIVTKTVKRPSASISIDDLAT.

Positions 3-64 (LDRYDLKILE…RLNTDVLVKR (62 aa)) constitute an HTH asnC-type domain. A DNA-binding region (H-T-H motif) is located at residues 22–41 (KSKLAEAINLSVSPCWERVR).

It is found in the cytoplasm. Its function is as follows. Acts as a transcriptional regulator. It binds DNA specifically to a fragment from the doeA promoter region. The protein is Transcriptional regulatory protein DoeX (doeX) of Halomonas elongata (strain ATCC 33173 / DSM 2581 / NBRC 15536 / NCIMB 2198 / 1H9).